The chain runs to 545 residues: T-complex protein 1 subunit gamma (545 aa).

At Met1 the chain carries N-acetylmethionine. The tract at residues 1 to 24 (MMGHRPVLVLSQNTKRESGRKVQS) is disordered. Ser11 is subject to Phosphoserine. Lys15 is covalently cross-linked (Glycyl lysine isopeptide (Lys-Gly) (interchain with G-Cter in SUMO2)). Residue Gly42 participates in ADP binding. Gly42 lines the ATP pocket. Asp93 lines the Mg(2+) pocket. ADP is bound by residues Gly94, Thr95, Thr96, Ser97, Thr162, and Lys163. ATP is bound by residues Gly94, Thr95, and Thr96. Ser170 bears the Phosphoserine mark. Position 222 is an N6-acetyllysine (Lys222). Phosphoserine is present on residues Ser243 and Ser244. Tyr247 is subject to Phosphotyrosine. Residues Lys248 and Lys249 each participate in a glycyl lysine isopeptide (Lys-Gly) (interchain with G-Cter in SUMO2) cross-link. Ser252 bears the Phosphoserine mark. Cys366 and Cys372 are oxidised to a cystine. Lys381 is covalently cross-linked (Glycyl lysine isopeptide (Lys-Gly) (interchain with G-Cter in SUMO2)). Gly411 provides a ligand contact to ADP. Gly411 is a binding site for ATP. Phosphothreonine occurs at positions 430 and 459. ADP is bound by residues Gly482, Glu483, Glu497, and Lys502. ATP is bound at residue Gly482. Glu497 lines the ATP pocket. The tract at residues 526–545 (HKKKGDDQSRQGGAPDAGQE) is disordered.

It belongs to the TCP-1 chaperonin family. As to quaternary structure, component of the chaperonin-containing T-complex (TRiC), a hexadecamer composed of two identical back-to-back stacked rings enclosing a protein folding chamber. Each ring is made up of eight different subunits: TCP1/CCT1, CCT2, CCT3, CCT4, CCT5, CCT6A/CCT6, CCT7, CCT8. Interacts with PACRG. Interacts with DNAAF4. Interacts with DLEC1.

The protein resides in the cytoplasm. It catalyses the reaction ATP + H2O = ADP + phosphate + H(+). Component of the chaperonin-containing T-complex (TRiC), a molecular chaperone complex that assists the folding of actin, tubulin and other proteins upon ATP hydrolysis. The TRiC complex mediates the folding of WRAP53/TCAB1, thereby regulating telomere maintenance. As part of the TRiC complex may play a role in the assembly of BBSome, a complex involved in ciliogenesis regulating transports vesicles to the cilia. This Bos taurus (Bovine) protein is T-complex protein 1 subunit gamma (CCT3).